The following is a 302-amino-acid chain: MAEASSFLAQKRYAVVTGANKGLGLEICGQLASQGVTVLLTSRDEKRGLEAIEELKKSGINSENLEYHQLDVTKPASFASLADFIKAKFGKLDILVNNAGISGVIVDYAALMEAIRRRGAEINYDGVMKQTYELAEECLQTNYYGVKRTINALLPLLQFSDSPRIVNVSSDVGLLKKIPGERIREALGDVEKLTEESVDGILDEFLRDFKEGKIAEKGWPTFKSAYSISKAALNSYTRVLARKYPSIIINCVCPGVVKTDINLKMGHLTVEEGAASPVRLALMPLGSPSGLFYTRNEVTPFE.

NADP(+)-binding positions include 20–23, arginine 43, 71–72, and asparagine 98; these read NKGL and DV. Serine 170 provides a ligand contact to substrate. NADP(+) contacts are provided by residues tyrosine 226, lysine 230, and 257–262; that span reads VKTDIN. Residue tyrosine 226 is the Proton acceptor of the active site.

It belongs to the short-chain dehydrogenases/reductases (SDR) family. In terms of tissue distribution, mainly expressed in flowers and flower buds, to a lesser extent in leaves and, at low levels, in stems and roots.

The protein operates within secondary metabolite biosynthesis; terpenoid biosynthesis. Component of the oleanane-type triterpene saponins (e.g. saponarioside A and saponarioside B) biosynthetic pathway, leading to the production of natural products with detergent properties used as traditional sources of soap. A dehydrogenase/reductase that, together with UGT74CD1, mediates the conversion of QA-tri to QA-triF; UGT74CD1 may transfer 4-keto-6-deoxy-glucose to QA-tri, which is in turn reduced to D-fucose by SDR1, thus leading to QA-triF formation via the initiation of the C-28 sugar chain. This Saponaria officinalis (Common soapwort) protein is Short-chain dehydrogenase/reductase 1.